Reading from the N-terminus, the 258-residue chain is Ubiquinone/menaquinone biosynthesis C-methyltransferase UbiE (258 aa).

S-adenosyl-L-methionine is bound by residues threonine 83, aspartate 104, and 130–131 (DA).

It belongs to the class I-like SAM-binding methyltransferase superfamily. MenG/UbiE family.

The enzyme catalyses a 2-demethylmenaquinol + S-adenosyl-L-methionine = a menaquinol + S-adenosyl-L-homocysteine + H(+). It carries out the reaction a 2-methoxy-6-(all-trans-polyprenyl)benzene-1,4-diol + S-adenosyl-L-methionine = a 5-methoxy-2-methyl-3-(all-trans-polyprenyl)benzene-1,4-diol + S-adenosyl-L-homocysteine + H(+). It functions in the pathway quinol/quinone metabolism; menaquinone biosynthesis; menaquinol from 1,4-dihydroxy-2-naphthoate: step 2/2. It participates in cofactor biosynthesis; ubiquinone biosynthesis. Its function is as follows. Methyltransferase required for the conversion of demethylmenaquinol (DMKH2) to menaquinol (MKH2) and the conversion of 2-polyprenyl-6-methoxy-1,4-benzoquinol (DDMQH2) to 2-polyprenyl-3-methyl-6-methoxy-1,4-benzoquinol (DMQH2). The protein is Ubiquinone/menaquinone biosynthesis C-methyltransferase UbiE of Bordetella bronchiseptica (strain ATCC BAA-588 / NCTC 13252 / RB50) (Alcaligenes bronchisepticus).